Consider the following 402-residue polypeptide: Putative cystathionine beta-lyase (402 aa).

Position 236 is an N6-(pyridoxal phosphate)lysine (Lys236).

The protein belongs to the class-II pyridoxal-phosphate-dependent aminotransferase family. MalY/PatB cystathionine beta-lyase subfamily. It depends on pyridoxal 5'-phosphate as a cofactor.

It carries out the reaction L,L-cystathionine + H2O = L-homocysteine + pyruvate + NH4(+). It catalyses the reaction an S-substituted L-cysteine + H2O = a thiol + pyruvate + NH4(+). It functions in the pathway amino-acid biosynthesis; L-methionine biosynthesis via de novo pathway; L-homocysteine from L-cystathionine: step 1/1. This is Putative cystathionine beta-lyase from Mycobacterium leprae (strain TN).